Here is a 614-residue protein sequence, read N- to C-terminus: 1-deoxy-D-xylulose-5-phosphate synthase (614 aa).

Residues H74 and 115–117 each bind thiamine diphosphate; that span reads AHS. Mg(2+) is bound at residue D146. Thiamine diphosphate contacts are provided by residues 147–148, N175, Y282, and E363; that span reads GA. N175 serves as a coordination point for Mg(2+).

This sequence belongs to the transketolase family. DXPS subfamily. In terms of assembly, homodimer. Mg(2+) is required as a cofactor. Thiamine diphosphate serves as cofactor.

It carries out the reaction D-glyceraldehyde 3-phosphate + pyruvate + H(+) = 1-deoxy-D-xylulose 5-phosphate + CO2. It participates in metabolic intermediate biosynthesis; 1-deoxy-D-xylulose 5-phosphate biosynthesis; 1-deoxy-D-xylulose 5-phosphate from D-glyceraldehyde 3-phosphate and pyruvate: step 1/1. Functionally, catalyzes the acyloin condensation reaction between C atoms 2 and 3 of pyruvate and glyceraldehyde 3-phosphate to yield 1-deoxy-D-xylulose-5-phosphate (DXP). The polypeptide is 1-deoxy-D-xylulose-5-phosphate synthase (Nitrosomonas europaea (strain ATCC 19718 / CIP 103999 / KCTC 2705 / NBRC 14298)).